The chain runs to 89 residues: Small ribosomal subunit protein uS15 (89 aa).

The protein belongs to the universal ribosomal protein uS15 family. In terms of assembly, part of the 30S ribosomal subunit. Forms a bridge to the 50S subunit in the 70S ribosome, contacting the 23S rRNA.

In terms of biological role, one of the primary rRNA binding proteins, it binds directly to 16S rRNA where it helps nucleate assembly of the platform of the 30S subunit by binding and bridging several RNA helices of the 16S rRNA. Functionally, forms an intersubunit bridge (bridge B4) with the 23S rRNA of the 50S subunit in the ribosome. The sequence is that of Small ribosomal subunit protein uS15 from Pseudomonas fluorescens (strain ATCC BAA-477 / NRRL B-23932 / Pf-5).